Here is a 4007-residue protein sequence, read N- to C-terminus: PKS-NRPS hybrid synthetase psoA (4007 aa).

One can recognise a Ketosynthase family 3 (KS3) domain in the interval 8 to 444 (KEPIAIIGTG…GTNCHAIVES (437 aa)). Catalysis depends on for beta-ketoacyl synthase activity residues C182, H321, and H364. The segment at 575 to 897 (VFTGQGAQWA…VLDRKADDIL (323 aa)) is malonyl-CoA:ACP transacylase (MAT) domain. The interval 969–1105 (HPLLGSRTPD…GHIRITLAAE (137 aa)) is N-terminal hotdog fold. The tract at residues 969 to 1147 (HPLLGSRTPD…LSYSGPFRAM (179 aa)) is dehydratase (DH) domain. The region spanning 969–1276 (HPLLGSRTPD…MSSFLPASEK (308 aa)) is the PKS/mFAS DH domain. The Proton acceptor; for dehydratase activity role is filled by H1001. Residues 1120-1276 (DLLPTSVDRF…MSSFLPASEK (157 aa)) are C-terminal hotdog fold. D1179 functions as the Proton donor; for dehydratase activity in the catalytic mechanism. The ketoreductase (KR) domain stretch occupies residues 2131–2305 (TYLLVGLTGH…PASVIDIGMV (175 aa)). In terms of domain architecture, Carrier 1 spans 2418–2495 (EARKVMENAL…QICDEVVASL (78 aa)). O-(pantetheine 4'-phosphoryl)serine is present on S2455. The disordered stretch occupies residues 2513 to 2550 (PAHKLRPWDKPSADTKRTDSIAPVPRSQIAANGPNGLP). Positions 2518 to 2531 (RPWDKPSADTKRTD) are enriched in basic and acidic residues. The condensation (C) domain stretch occupies residues 2589 to 2885 (QPLSLGQSRL…LETIPLWFKV (297 aa)). Residues 3076 to 3478 (TYVQLAERAN…LGDVARALVQ (403 aa)) form an adenylation (A) domain region. Residues 3576–3652 (TPTEARLRDV…LLAARLDGTS (77 aa)) form the Carrier 2 domain. An O-(pantetheine 4'-phosphoryl)serine modification is found at S3612. Residues 3696–3920 (LTGATGFLGG…INVETVSNNI (225 aa)) are reductase (R) domain.

This sequence in the C-terminal section; belongs to the NRP synthetase family.

It participates in secondary metabolite biosynthesis. Functionally, PKS-NRPS hybrid synthetase; part of the gene cluster that mediates the biosynthesis of pseurotin A, a competitive inhibitor of chitin synthase and an inducer of nerve-cell proliferation. The PKS-NRPS hybrid synthetase psoA is responsible for the biosynthesis of azaspirene, one of the first intermediates having the 1-oxa-7-azaspiro[4,4]-non-2-ene-4,6-dione core of pseurotin, via condensation of one acetyl-CoA, 4 malonyl-CoA, and a L-phenylalanine molecule. The dual-functional monooxygenase/methyltransferase psoF seems to be involved in the addition of the C3 methyl group onto the pseurotin scaffold. Azaspirene is then converted to synerazol through 4 steps including oxidation of C17 by the cytochrome P450 monooxygenase psoD, O-methylation of the hydroxy group of C8 by the methyltransferase psoC, and the trans-to-cis isomerization of the C13 olefin by the glutathione S-transferase psoE. The fourth step of synerazol production is performed by the dual-functional monooxygenase/methyltransferase psoF which seems to catalyze the epoxidation of the intermediate deepoxy-synerazol. Synerazol can be attacked by a water molecule nonenzymatically at two different positions to yield two diol products, pseurotin A and pseurotin D. This chain is PKS-NRPS hybrid synthetase psoA, found in Aspergillus fumigatus (strain ATCC MYA-4609 / CBS 101355 / FGSC A1100 / Af293) (Neosartorya fumigata).